A 424-amino-acid chain; its full sequence is Serine--tRNA ligase (424 aa).

Position 231 to 233 (231 to 233) interacts with L-serine; it reads TAE. Residue 262–264 coordinates ATP; the sequence is RSE. E285 lines the L-serine pocket. An ATP-binding site is contributed by 349–352; it reads EISS. Residue S385 participates in L-serine binding.

It belongs to the class-II aminoacyl-tRNA synthetase family. Type-1 seryl-tRNA synthetase subfamily. In terms of assembly, homodimer. The tRNA molecule binds across the dimer.

The protein localises to the cytoplasm. The enzyme catalyses tRNA(Ser) + L-serine + ATP = L-seryl-tRNA(Ser) + AMP + diphosphate + H(+). The catalysed reaction is tRNA(Sec) + L-serine + ATP = L-seryl-tRNA(Sec) + AMP + diphosphate + H(+). It functions in the pathway aminoacyl-tRNA biosynthesis; selenocysteinyl-tRNA(Sec) biosynthesis; L-seryl-tRNA(Sec) from L-serine and tRNA(Sec): step 1/1. Its function is as follows. Catalyzes the attachment of serine to tRNA(Ser). Is also able to aminoacylate tRNA(Sec) with serine, to form the misacylated tRNA L-seryl-tRNA(Sec), which will be further converted into selenocysteinyl-tRNA(Sec). The sequence is that of Serine--tRNA ligase from Bacillus cereus (strain ATCC 10987 / NRS 248).